A 316-amino-acid chain; its full sequence is Heme oxygenase 2 (316 aa).

A compositionally biased stretch (acidic residues) spans 1–12 (MSAEVETSEGVD). The segment at 1 to 29 (MSAEVETSEGVDESEKKNSGALEKENQMR) is disordered. S2 carries the post-translational modification N-acetylserine. Phosphoserine is present on S2. Residues 13–27 (ESEKKNSGALEKENQ) show a composition bias toward basic and acidic residues. Heme b is bound at residue H45. 2 HRM repeats span residues 264 to 269 (KCPFYA) and 281 to 286 (SCPFRT). Residues C265 and C282 each carry the S-nitrosocysteine modification.

This sequence belongs to the heme oxygenase family. In terms of processing, S-nitrosylated by BLVRB.

It localises to the microsome. The protein localises to the endoplasmic reticulum. It catalyses the reaction heme b + 3 reduced [NADPH--hemoprotein reductase] + 3 O2 = biliverdin IXalpha + CO + Fe(2+) + 3 oxidized [NADPH--hemoprotein reductase] + 3 H2O + H(+). In terms of biological role, heme oxygenase cleaves the heme ring at the alpha methene bridge to form biliverdin. Biliverdin is subsequently converted to bilirubin by biliverdin reductase. Under physiological conditions, the activity of heme oxygenase is highest in the spleen, where senescent erythrocytes are sequestrated and destroyed. Heme oxygenase 2 could be implicated in the production of carbon monoxide in brain where it could act as a neurotransmitter. The sequence is that of Heme oxygenase 2 (HMOX2) from Macaca fascicularis (Crab-eating macaque).